The following is a 747-amino-acid chain: Fatty acid oxidation complex subunit alpha (747 aa).

The segment at 1–197 (MGASATNSVT…KMGLVDDVVP (197 aa)) is enoyl-CoA hydratase. Residues 313 to 747 (RAIHRVGVLG…NIDEVTDVAS (435 aa)) are 3-hydroxyacyl-CoA dehydrogenase. The interval 590 to 614 (YLYSNPTKNSSPTKNGNSPAKRNSF) is disordered. The segment covering 593–610 (SNPTKNSSPTKNGNSPAK) has biased composition (polar residues).

This sequence in the N-terminal section; belongs to the enoyl-CoA hydratase/isomerase family. In the central section; belongs to the 3-hydroxyacyl-CoA dehydrogenase family. Heterotetramer of two alpha chains (FadJ) and two beta chains (FadI).

It is found in the cytoplasm. It catalyses the reaction a (3S)-3-hydroxyacyl-CoA = a (2E)-enoyl-CoA + H2O. It carries out the reaction a 4-saturated-(3S)-3-hydroxyacyl-CoA = a (3E)-enoyl-CoA + H2O. The enzyme catalyses a (3S)-3-hydroxyacyl-CoA + NAD(+) = a 3-oxoacyl-CoA + NADH + H(+). The catalysed reaction is (3S)-3-hydroxybutanoyl-CoA = (3R)-3-hydroxybutanoyl-CoA. It functions in the pathway lipid metabolism; fatty acid beta-oxidation. Functionally, catalyzes the formation of a hydroxyacyl-CoA by addition of water on enoyl-CoA. Also exhibits 3-hydroxyacyl-CoA epimerase and 3-hydroxyacyl-CoA dehydrogenase activities. The chain is Fatty acid oxidation complex subunit alpha from Yersinia pseudotuberculosis serotype O:1b (strain IP 31758).